The chain runs to 113 residues: Hydrogenase maturation factor HypA (113 aa).

Ni(2+) is bound at residue histidine 2. Zn(2+)-binding residues include cysteine 73, cysteine 76, cysteine 89, and cysteine 92.

This sequence belongs to the HypA/HybF family.

Functionally, involved in the maturation of [NiFe] hydrogenases. Required for nickel insertion into the metal center of the hydrogenase. This chain is Hydrogenase maturation factor HypA, found in Beijerinckia indica subsp. indica (strain ATCC 9039 / DSM 1715 / NCIMB 8712).